Reading from the N-terminus, the 289-residue chain is Transcription factor MafA (289 aa).

A compositionally biased stretch (low complexity) spans 52 to 73; the sequence is STPISTPCSSVPSSPSFCAPSP. Disordered stretches follow at residues 52-87 and 126-164; these read STPI…PNAA and HHHH…HHHH. Polar residues predominate over residues 74 to 87; the sequence is GAQSGVNPSNPNAA. Over residues 152-164 the composition is skewed to basic residues; sequence GHHHQVHHHHHHH. The segment at 201 to 226 is basic motif; the sequence is RLKQKRRTLKNRGYAQSCRYKRVQQR. The bZIP domain occupies 201 to 264; that stretch reads RLKQKRRTLK…DLYKDKYEKL (64 aa). Positions 229–250 are leucine-zipper; sequence LETEKCQLQSQVEQLKQEVSRL. The interval 266-289 is disordered; that stretch reads SRSFTTRESPPQGNPGKANADFFM. The span at 267–276 shows a compositional bias: polar residues; sequence RSFTTRESPP.

This sequence belongs to the bZIP family. Maf subfamily.

It localises to the nucleus. In terms of biological role, transcription factor, possibly involved in transcription regulation during lens development. The chain is Transcription factor MafA (mafa) from Xenopus tropicalis (Western clawed frog).